The sequence spans 494 residues: Probable cobyric acid synthase (494 aa).

Residues 249-447 form the GATase cobBQ-type domain; the sequence is SVRIAVIRLP…LHGIFFNRRF (199 aa). The Nucleophile role is filled by C331. H439 is an active-site residue.

The protein belongs to the CobB/CobQ family. CobQ subfamily.

It participates in cofactor biosynthesis; adenosylcobalamin biosynthesis. In terms of biological role, catalyzes amidations at positions B, D, E, and G on adenosylcobyrinic A,C-diamide. NH(2) groups are provided by glutamine, and one molecule of ATP is hydrogenolyzed for each amidation. This is Probable cobyric acid synthase from Methanopyrus kandleri (strain AV19 / DSM 6324 / JCM 9639 / NBRC 100938).